The chain runs to 211 residues: Large ribosomal subunit protein uL4 (211 aa).

Positions 40–85 are disordered; that stretch reads QQAHSRQGTASTLTRSEVRGGGRKPYKQKGTGRARQGSVRTPLRPG. Polar residues predominate over residues 41-54; sequence QAHSRQGTASTLTR. Residues 60–71 show a composition bias toward basic residues; it reads GGRKPYKQKGTG.

The protein belongs to the universal ribosomal protein uL4 family. Part of the 50S ribosomal subunit.

One of the primary rRNA binding proteins, this protein initially binds near the 5'-end of the 23S rRNA. It is important during the early stages of 50S assembly. It makes multiple contacts with different domains of the 23S rRNA in the assembled 50S subunit and ribosome. Its function is as follows. Forms part of the polypeptide exit tunnel. This Synechococcus sp. (strain CC9311) protein is Large ribosomal subunit protein uL4.